The chain runs to 92 residues: Large ribosomal subunit protein eL43 (92 aa).

Residues 39–60 form a C4-type zinc finger; that stretch reads CDFCGKYGMKRKAVGIWSCKGC.

The protein belongs to the eukaryotic ribosomal protein eL43 family.

The polypeptide is Large ribosomal subunit protein eL43 (RPL37a) (Ostreococcus lucimarinus (strain CCE9901)).